A 123-amino-acid chain; its full sequence is MPTLNQLVRKPRKRPVAKSKVPALDANPQKRGVCTRVYTTTPKKPNSALRKVARVRLTNGFEVSSYIPGEGHNLQEHSVVLIRGGRVKDLPGVRYHIVRGTLDTAGVKNRKQSRSKYGAKRPK.

The disordered stretch occupies residues M1–A26. Position 89 is a 3-methylthioaspartic acid (D89). The segment at T104–K123 is disordered. The span at K108–K123 shows a compositional bias: basic residues.

This sequence belongs to the universal ribosomal protein uS12 family. In terms of assembly, part of the 30S ribosomal subunit. Contacts proteins S8 and S17. May interact with IF1 in the 30S initiation complex.

In terms of biological role, with S4 and S5 plays an important role in translational accuracy. Interacts with and stabilizes bases of the 16S rRNA that are involved in tRNA selection in the A site and with the mRNA backbone. Located at the interface of the 30S and 50S subunits, it traverses the body of the 30S subunit contacting proteins on the other side and probably holding the rRNA structure together. The combined cluster of proteins S8, S12 and S17 appears to hold together the shoulder and platform of the 30S subunit. This chain is Small ribosomal subunit protein uS12, found in Acidithiobacillus ferrooxidans (strain ATCC 23270 / DSM 14882 / CIP 104768 / NCIMB 8455) (Ferrobacillus ferrooxidans (strain ATCC 23270)).